A 66-amino-acid chain; its full sequence is Pancreatic polypeptide prohormone (66 aa).

Y36 carries the post-translational modification Tyrosine amide. A propeptide spanning residues 60-66 (ELSPMDV) is cleaved from the precursor.

Belongs to the NPY family.

The protein resides in the secreted. Its function is as follows. Hormone secreted by pancreatic cells that acts as a regulator of pancreatic and gastrointestinal functions probably by signaling through the G protein-coupled receptor NPY4R2. The chain is Pancreatic polypeptide prohormone (PPY) from Felis catus (Cat).